The primary structure comprises 158 residues: Small ribosomal subunit protein uS7 (158 aa).

It belongs to the universal ribosomal protein uS7 family. In terms of assembly, part of the 30S ribosomal subunit. Contacts proteins S9 and S11.

Its function is as follows. One of the primary rRNA binding proteins, it binds directly to 16S rRNA where it nucleates assembly of the head domain of the 30S subunit. Is located at the subunit interface close to the decoding center, probably blocks exit of the E-site tRNA. This Porphyromonas gingivalis (strain ATCC 33277 / DSM 20709 / CIP 103683 / JCM 12257 / NCTC 11834 / 2561) protein is Small ribosomal subunit protein uS7.